The sequence spans 389 residues: Probable nitrate transporter NarT (389 aa).

A run of 12 helical transmembrane segments spans residues Thr-14–Ile-34, Ile-45–Tyr-65, Ile-69–Phe-89, Gly-97–Val-117, Gly-139–Trp-159, Thr-161–Gly-181, Trp-211–Val-231, Gly-246–Phe-266, Ala-268–Ile-288, Leu-294–Phe-314, Ile-331–Ala-351, and Leu-353–Phe-373.

This sequence belongs to the major facilitator superfamily. Nitrate/nitrite porter (TC 2.A.1.8) family.

It is found in the cell membrane. Probably required for nitrate uptake under anoxic conditions. Also possibly involved in excretion of nitrite produced by the dissimilatory reduction of nitrate. This is Probable nitrate transporter NarT (narT) from Staphylococcus aureus (strain JH9).